The chain runs to 378 residues: tRNA-specific 2-thiouridylase MnmA (378 aa).

ATP contacts are provided by residues 27-34 (AMSGGVDS) and leucine 53. Cysteine 121 functions as the Nucleophile in the catalytic mechanism. A disulfide bond links cysteine 121 and cysteine 218. Residue glycine 145 coordinates ATP. The segment at 168 to 170 (RDQ) is interaction with tRNA. Cysteine 218 acts as the Cysteine persulfide intermediate in catalysis.

The protein belongs to the MnmA/TRMU family.

It is found in the cytoplasm. The catalysed reaction is S-sulfanyl-L-cysteinyl-[protein] + uridine(34) in tRNA + AH2 + ATP = 2-thiouridine(34) in tRNA + L-cysteinyl-[protein] + A + AMP + diphosphate + H(+). Catalyzes the 2-thiolation of uridine at the wobble position (U34) of tRNA, leading to the formation of s(2)U34. The chain is tRNA-specific 2-thiouridylase MnmA from Rhizorhabdus wittichii (strain DSM 6014 / CCUG 31198 / JCM 15750 / NBRC 105917 / EY 4224 / RW1) (Sphingomonas wittichii).